The sequence spans 392 residues: Phosphoglycerate kinase (392 aa).

Residues 26–28, arginine 41, 64–67, arginine 118, and arginine 151 contribute to the substrate site; these read DLN and HLGR. ATP contacts are provided by residues lysine 202, glutamate 319, and 345 to 348; that span reads GGDT.

Belongs to the phosphoglycerate kinase family. As to quaternary structure, monomer.

It localises to the cytoplasm. The enzyme catalyses (2R)-3-phosphoglycerate + ATP = (2R)-3-phospho-glyceroyl phosphate + ADP. Its pathway is carbohydrate degradation; glycolysis; pyruvate from D-glyceraldehyde 3-phosphate: step 2/5. This Photobacterium profundum (strain SS9) protein is Phosphoglycerate kinase.